Reading from the N-terminus, the 187-residue chain is Ribosome-recycling factor (187 aa).

It belongs to the RRF family.

The protein localises to the cytoplasm. Functionally, responsible for the release of ribosomes from messenger RNA at the termination of protein biosynthesis. May increase the efficiency of translation by recycling ribosomes from one round of translation to another. This chain is Ribosome-recycling factor, found in Anaeromyxobacter sp. (strain Fw109-5).